The sequence spans 348 residues: Phosphate acyltransferase (348 aa).

It belongs to the PlsX family. In terms of assembly, homodimer. Probably interacts with PlsY.

It localises to the cytoplasm. The catalysed reaction is a fatty acyl-[ACP] + phosphate = an acyl phosphate + holo-[ACP]. It participates in lipid metabolism; phospholipid metabolism. Catalyzes the reversible formation of acyl-phosphate (acyl-PO(4)) from acyl-[acyl-carrier-protein] (acyl-ACP). This enzyme utilizes acyl-ACP as fatty acyl donor, but not acyl-CoA. This chain is Phosphate acyltransferase, found in Pectobacterium atrosepticum (strain SCRI 1043 / ATCC BAA-672) (Erwinia carotovora subsp. atroseptica).